The primary structure comprises 365 residues: Protein-glutamate methylesterase/protein-glutamine glutaminase 1 (365 aa).

A Response regulatory domain is found at 4 to 121; it reads KVLVVDDSQF…SRDSVVLKKR (118 aa). Asp55 is subject to 4-aspartylphosphate. Residues 138–173 are disordered; the sequence is AARSTTQPSGVRPSALGANLSSSRSPRPASSAPSAP. Residues 158 to 172 show a composition bias toward low complexity; sequence SSSRSPRPASSAPSA. The region spanning 182 to 365 is the CheB-type methylesterase domain; that stretch reads KLVAIGASTG…QVWQRLVSDV (184 aa). Residues Ser189, His216, and Asp310 contribute to the active site.

The protein belongs to the CheB family. Post-translationally, phosphorylated by CheA. Phosphorylation of the N-terminal regulatory domain activates the methylesterase activity.

The protein resides in the cytoplasm. It catalyses the reaction [protein]-L-glutamate 5-O-methyl ester + H2O = L-glutamyl-[protein] + methanol + H(+). The enzyme catalyses L-glutaminyl-[protein] + H2O = L-glutamyl-[protein] + NH4(+). Its function is as follows. Involved in chemotaxis. Part of a chemotaxis signal transduction system that modulates chemotaxis in response to various stimuli. Catalyzes the demethylation of specific methylglutamate residues introduced into the chemoreceptors (methyl-accepting chemotaxis proteins or MCP) by CheR. Also mediates the irreversible deamidation of specific glutamine residues to glutamic acid. This Saccharophagus degradans (strain 2-40 / ATCC 43961 / DSM 17024) protein is Protein-glutamate methylesterase/protein-glutamine glutaminase 1.